A 1404-amino-acid polypeptide reads, in one-letter code: DNA-directed RNA polymerase subunit beta' (1404 aa).

Residues Cys60, Cys62, Cys75, and Cys78 each contribute to the Zn(2+) site. Mg(2+) contacts are provided by Asp449, Asp451, and Asp453. Zn(2+) is bound by residues Cys778, Cys852, Cys859, and Cys862. The disordered stretch occupies residues 1381–1404; that stretch reads DRPLEEEEEEEIPQSIADDSDGDE. Residues 1384–1404 show a composition bias toward acidic residues; that stretch reads LEEEEEEEIPQSIADDSDGDE.

It belongs to the RNA polymerase beta' chain family. As to quaternary structure, the RNAP catalytic core consists of 2 alpha, 1 beta, 1 beta' and 1 omega subunit. When a sigma factor is associated with the core the holoenzyme is formed, which can initiate transcription. It depends on Mg(2+) as a cofactor. Requires Zn(2+) as cofactor.

It catalyses the reaction RNA(n) + a ribonucleoside 5'-triphosphate = RNA(n+1) + diphosphate. DNA-dependent RNA polymerase catalyzes the transcription of DNA into RNA using the four ribonucleoside triphosphates as substrates. This is DNA-directed RNA polymerase subunit beta' from Leptospira borgpetersenii serovar Hardjo-bovis (strain L550).